Reading from the N-terminus, the 258-residue chain is Imidazole glycerol phosphate synthase subunit HisF (258 aa).

Catalysis depends on residues Asp-11 and Asp-130.

This sequence belongs to the HisA/HisF family. As to quaternary structure, heterodimer of HisH and HisF.

The protein localises to the cytoplasm. The catalysed reaction is 5-[(5-phospho-1-deoxy-D-ribulos-1-ylimino)methylamino]-1-(5-phospho-beta-D-ribosyl)imidazole-4-carboxamide + L-glutamine = D-erythro-1-(imidazol-4-yl)glycerol 3-phosphate + 5-amino-1-(5-phospho-beta-D-ribosyl)imidazole-4-carboxamide + L-glutamate + H(+). It functions in the pathway amino-acid biosynthesis; L-histidine biosynthesis; L-histidine from 5-phospho-alpha-D-ribose 1-diphosphate: step 5/9. IGPS catalyzes the conversion of PRFAR and glutamine to IGP, AICAR and glutamate. The HisF subunit catalyzes the cyclization activity that produces IGP and AICAR from PRFAR using the ammonia provided by the HisH subunit. In Yersinia pseudotuberculosis serotype O:3 (strain YPIII), this protein is Imidazole glycerol phosphate synthase subunit HisF.